A 418-amino-acid chain; its full sequence is NADH-quinone oxidoreductase subunit D (418 aa).

This sequence belongs to the complex I 49 kDa subunit family. As to quaternary structure, NDH-1 is composed of 14 different subunits. Subunits NuoB, C, D, E, F, and G constitute the peripheral sector of the complex.

It is found in the cell inner membrane. The enzyme catalyses a quinone + NADH + 5 H(+)(in) = a quinol + NAD(+) + 4 H(+)(out). In terms of biological role, NDH-1 shuttles electrons from NADH, via FMN and iron-sulfur (Fe-S) centers, to quinones in the respiratory chain. The immediate electron acceptor for the enzyme in this species is believed to be ubiquinone. Couples the redox reaction to proton translocation (for every two electrons transferred, four hydrogen ions are translocated across the cytoplasmic membrane), and thus conserves the redox energy in a proton gradient. The chain is NADH-quinone oxidoreductase subunit D from Neisseria meningitidis serogroup A / serotype 4A (strain DSM 15465 / Z2491).